The sequence spans 261 residues: Small ribosomal subunit protein eS1 (261 aa).

Positions 1–18 are enriched in basic residues; the sequence is MAVGKNKRISKGKKGGKK. Residues 1–22 form a disordered region; it reads MAVGKNKRISKGKKGGKKKAAD.

Belongs to the eukaryotic ribosomal protein eS1 family. In terms of assembly, component of the small ribosomal subunit. Mature ribosomes consist of a small (40S) and a large (60S) subunit. The 40S subunit contains about 33 different proteins and 1 molecule of RNA (18S). The 60S subunit contains about 49 different proteins and 3 molecules of RNA (25S, 5.8S and 5S).

It is found in the cytoplasm. The protein is Small ribosomal subunit protein eS1 of Cicer arietinum (Chickpea).